We begin with the raw amino-acid sequence, 163 residues long: Cell division protein SepF (163 aa).

The segment at 25-53 is disordered; that stretch reads SVAPHSGEERESAFSRRSAERAERTERPT. Residues 30 to 51 show a composition bias toward basic and acidic residues; it reads SGEERESAFSRRSAERAERTER.

This sequence belongs to the SepF family. Homodimer. Interacts with FtsZ.

It localises to the cytoplasm. Cell division protein that is part of the divisome complex and is recruited early to the Z-ring. Probably stimulates Z-ring formation, perhaps through the cross-linking of FtsZ protofilaments. Its function overlaps with FtsA. The chain is Cell division protein SepF from Heliobacterium modesticaldum (strain ATCC 51547 / Ice1).